Consider the following 217-residue polypeptide: FMN-dependent NADH:quinone oxidoreductase (217 aa).

Residues Ser-10 and 16 to 18 (SVS) each bind FMN.

The protein belongs to the azoreductase type 1 family. As to quaternary structure, homodimer. It depends on FMN as a cofactor.

The catalysed reaction is 2 a quinone + NADH + H(+) = 2 a 1,4-benzosemiquinone + NAD(+). The enzyme catalyses N,N-dimethyl-1,4-phenylenediamine + anthranilate + 2 NAD(+) = 2-(4-dimethylaminophenyl)diazenylbenzoate + 2 NADH + 2 H(+). Quinone reductase that provides resistance to thiol-specific stress caused by electrophilic quinones. Functionally, also exhibits azoreductase activity. Catalyzes the reductive cleavage of the azo bond in aromatic azo compounds to the corresponding amines. This chain is FMN-dependent NADH:quinone oxidoreductase, found in Polaromonas naphthalenivorans (strain CJ2).